Reading from the N-terminus, the 903-residue chain is Disintegrin and metalloproteinase domain-containing protein 12 (903 aa).

Residues M1 to G31 form the signal peptide. Residues M32–R205 constitute a propeptide that is removed on maturation. Residues N112, N147, and N157 are each glycosylated (N-linked (GlcNAc...) asparagine). A Cysteine switch motif is present at residues G175 to N182. A Zn(2+)-binding site is contributed by C177. 2 N-linked (GlcNAc...) asparagine glycosylation sites follow: N182 and N185. Topologically, residues E206–G706 are extracellular. The 203-residue stretch at K212–P414 folds into the Peptidase M12B domain. 3 cysteine pairs are disulfide-bonded: C323–C409, C365–C393, and C367–C376. H348 serves as a coordination point for Zn(2+). E349 is an active-site residue. Zn(2+) is bound by residues H352 and H358. The Disintegrin domain maps to G422–D508. Residue N450 is glycosylated (N-linked (GlcNAc...) asparagine). C480 and C500 are joined by a disulfide. N-linked (GlcNAc...) asparagine glycosylation is present at N649. The EGF-like domain maps to G654 to D686. Cystine bridges form between C658/C668, C662/C674, and C676/C685. A helical transmembrane segment spans residues L707–L727. Residues K728 to K903 are Cytoplasmic-facing. Disordered stretches follow at residues S753–K790 and H819–K903. Short sequence motifs (SH3-binding; class II) lie at residues A824–R830 and K846–K852. Short sequence motifs (SH3-binding; class I) lie at residues R830–A837, K852–P858, and R881–P887. Residues P847–A856 show a composition bias toward pro residues. Phosphotyrosine; by SRC is present on Y901.

As to quaternary structure, interacts with alpha-actinin-2 and with syndecans. Interacts with SH3PXD2A. Interacts with FST3. Interacts with RACK1; the interaction is required for PKC-dependent translocation of ADAM12 to the cell membrane. It depends on Zn(2+) as a cofactor. Post-translationally, the precursor is cleaved by a furin endopeptidase. Expressed during early developing mesenchymal cells that give rise to skeletal muscle, bones and visceral organs. Not expressed in adult normal muscle but expressed in regenerating muscle.

Its subcellular location is the membrane. Involved in skeletal muscle regeneration, specifically at the onset of cell fusion. Also involved in macrophage-derived giant cells (MGC) and osteoclast formation from mononuclear precursors. This is Disintegrin and metalloproteinase domain-containing protein 12 (Adam12) from Mus musculus (Mouse).